We begin with the raw amino-acid sequence, 334 residues long: UDP-N-acetylglucosamine--N-acetylmuramyl-(pentapeptide) pyrophosphoryl-undecaprenol N-acetylglucosamine transferase (334 aa).

Residues 11–13 (TGG), asparagine 125, serine 185, isoleucine 229, and glutamine 274 contribute to the UDP-N-acetyl-alpha-D-glucosamine site.

The protein belongs to the glycosyltransferase 28 family. MurG subfamily.

Its subcellular location is the cell inner membrane. It catalyses the reaction di-trans,octa-cis-undecaprenyl diphospho-N-acetyl-alpha-D-muramoyl-L-alanyl-D-glutamyl-meso-2,6-diaminopimeloyl-D-alanyl-D-alanine + UDP-N-acetyl-alpha-D-glucosamine = di-trans,octa-cis-undecaprenyl diphospho-[N-acetyl-alpha-D-glucosaminyl-(1-&gt;4)]-N-acetyl-alpha-D-muramoyl-L-alanyl-D-glutamyl-meso-2,6-diaminopimeloyl-D-alanyl-D-alanine + UDP + H(+). Its pathway is cell wall biogenesis; peptidoglycan biosynthesis. In terms of biological role, cell wall formation. Catalyzes the transfer of a GlcNAc subunit on undecaprenyl-pyrophosphoryl-MurNAc-pentapeptide (lipid intermediate I) to form undecaprenyl-pyrophosphoryl-MurNAc-(pentapeptide)GlcNAc (lipid intermediate II). The sequence is that of UDP-N-acetylglucosamine--N-acetylmuramyl-(pentapeptide) pyrophosphoryl-undecaprenol N-acetylglucosamine transferase from Thermosipho africanus (strain TCF52B).